The chain runs to 237 residues: UPF0173 metal-dependent hydrolase BCAN_B0597 (237 aa).

This sequence belongs to the UPF0173 family.

This is UPF0173 metal-dependent hydrolase BCAN_B0597 from Brucella canis (strain ATCC 23365 / NCTC 10854 / RM-666).